Consider the following 2615-residue polypeptide: Collagen alpha-5(VI) chain (2615 aa).

A signal peptide spans 1 to 18; sequence MKILLIIFVLIIWTETLA. Positions 19 to 1394 are nonhelical region; the sequence is DQSPGPGPVY…TCCCTFCKCP (1376 aa). 7 consecutive VWFA domains span residues 30-209, 236-413, 442-612, 628-797, 814-987, 1005-1178, and 1194-1376; these read DVVF…IKDV, DLVF…LKKL, DIHF…KNEV, DIMF…ERKL, DVVF…FTLV, DVIF…KKRI, and DIVV…KLSQ. N-linked (GlcNAc...) asparagine glycosylation is found at Asn201 and Asn260. A glycan (N-linked (GlcNAc...) asparagine) is linked at Asn835. 6 consecutive Collagen-like domains span residues 1395–1446, 1434–1490, 1464–1520, 1524–1580, 1579–1629, and 1674–1729; these read GIPG…GCPG, GPQG…KGDP, GDDG…PGQN, KGQK…TLGA, GAEG…LGKK, and GDAG…MAGQ. The interval 1395–1728 is triple-helical region; it reads GIPGPHGTRG…GQRGIKGMAG (334 aa). The tract at residues 1404–1693 is disordered; the sequence is GLQAMKGSQG…NPGIPGGPGP (290 aa). The short motif at 1430-1432 is the Cell attachment site element; it reads RGD. The segment covering 1511 to 1522 has biased composition (low complexity); the sequence is PGDPGNPGQNNN. Low complexity-rich tracts occupy residues 1601 to 1611 and 1622 to 1641; these read SQGQKGPQGSP and RPGL…LGPV. Positions 1729–2615 are nonhelical region; it reads QPVYSQCDLI…EDKEMEATDI (887 aa). 3 consecutive VWFA domains span residues 1758–1965, 1963–2154, and 2291–2487; these read ELVF…MDVV, DVVF…AKFL, and DVAF…VKPF. A glycan (N-linked (GlcNAc...) asparagine) is linked at Asn2509.

Belongs to the type VI collagen family. As to quaternary structure, trimers composed of three different chains: alpha-1(VI), alpha-2(VI), and alpha-3(VI) or alpha-5(VI) or alpha-6(VI). Post-translationally, prolines at the third position of the tripeptide repeating unit (G-X-Y) are hydroxylated in some or all of the chains. Expressed in skin, followed by lung, small intestine, colon and testis. In skin, it is expressed in the epidermis with strongest staining in suprabasal viable layers. In ATOD patients, it is absent in the most differentiated upper spinous and granular layers (at protein level).

It is found in the secreted. It localises to the extracellular space. The protein localises to the extracellular matrix. Collagen VI acts as a cell-binding protein. In Homo sapiens (Human), this protein is Collagen alpha-5(VI) chain (COL6A5).